A 451-amino-acid polypeptide reads, in one-letter code: Tubulin alpha-1B chain (451 aa).

The short motif at 1 to 4 (MREC) is the MREC motif element. GTP-binding residues include Gly10, Gln11, Ala12, and Gln15. N6,N6,N6-trimethyllysine; alternate is present on Lys40. N6-acetyllysine; alternate is present on Lys40. Ser48 carries the post-translational modification Phosphoserine. GTP contacts are provided by Glu71, Ala99, Ser140, Gly143, Gly144, Thr145, Gly146, Thr179, Glu183, Asn206, Tyr224, and Asn228. Glu71 contributes to the Mg(2+) binding site. The residue at position 232 (Ser232) is a Phosphoserine. Leu252 provides a ligand contact to GTP. Glu254 is a catalytic residue. Residue Tyr282 is modified to 3'-nitrotyrosine. Lys326 participates in a covalent cross-link: Glycyl lysine isopeptide (Lys-Gly) (interchain with G-Cter in ubiquitin). At Arg339 the chain carries Omega-N-methylarginine. A Glycyl lysine isopeptide (Lys-Gly) (interchain with G-Cter in ubiquitin) cross-link involves residue Lys370. A disordered region spans residues 432 to 451 (YEEVGVDSVEGEGEEEGEEY). Ser439 bears the Phosphoserine mark. 5-glutamyl polyglutamate is present on residues Glu443 and Glu445. Tyr451 carries the 3'-nitrotyrosine modification.

The protein belongs to the tubulin family. Heterodimer of alpha- and beta-tubulin. A typical microtubule is a hollow water-filled tube with an outer diameter of 25 nm and an inner diameter of 15 nM. Alpha-beta heterodimers associate head-to-tail to form protofilaments running lengthwise along the microtubule wall with the beta-tubulin subunit facing the microtubule plus end conferring a structural polarity. Microtubules usually have 13 protofilaments but different protofilament numbers can be found in some organisms and specialized cells. Interacts with gamma-tubulin; the interaction allows microtubules to nucleate from the gamma-tubulin ring complex (gTuRC). Nascent microtubule interacts (via alpha-tubulin MREC motif) with TTC5/STRAP; this interaction may result in tubulin mRNA-targeted degradation. Component of sperm flagellar doublet microtubules. The cofactor is Mg(2+). Some glutamate residues at the C-terminus are polyglutamylated, resulting in polyglutamate chains on the gamma-carboxyl group. Polyglutamylation plays a key role in microtubule severing by spastin (SPAST). SPAST preferentially recognizes and acts on microtubules decorated with short polyglutamate tails: severing activity by SPAST increases as the number of glutamates per tubulin rises from one to eight, but decreases beyond this glutamylation threshold. Glutamylation is also involved in cilia motility. In terms of processing, some glutamate residues at the C-terminus are monoglycylated but not polyglycylated due to the absence of functional TTLL10 in human. Monoglycylation is mainly limited to tubulin incorporated into cilia and flagella axonemes, which is required for their stability and maintenance. Flagella glycylation controls sperm motility. Both polyglutamylation and monoglycylation can coexist on the same protein on adjacent residues, and lowering glycylation levels increases polyglutamylation, and reciprocally. Post-translationally, acetylation of alpha chains at Lys-40 is located inside the microtubule lumen. This modification has been correlated with increased microtubule stability, intracellular transport and ciliary assembly. Methylation of alpha chains at Lys-40 is found in mitotic microtubules and is required for normal mitosis and cytokinesis contributing to genomic stability. In terms of processing, nitration of Tyr-451 is irreversible and interferes with normal dynein intracellular distribution. Post-translationally, undergoes a tyrosination/detyrosination cycle, the cyclic removal and re-addition of a C-terminal tyrosine residue by the enzymes tubulin tyrosine carboxypeptidase (MATCAP1/KIAA0895L, VASH1 or VASH2) and tubulin tyrosine ligase (TTL), respectively. Tyrosination promotes microtubule interaction with CAP-Gly domain-containing proteins such as CLIP1, CLIP2 and DCTN1. Tyrosination regulates the initiation of dynein-dynactin motility via interaction with DCTN1, which brings the dynein-dynactin complex into contact with microtubules. In neurons, tyrosinated tubulins mediate the initiation of retrograde vesicle transport. In terms of processing, detyrosination is involved in metaphase plate congression by guiding chromosomes during mitosis: detyrosination promotes interaction with CENPE, promoting pole-proximal transport of chromosomes toward the equator. Detyrosination increases microtubules-dependent mechanotransduction in dystrophic cardiac and skeletal muscle. In cardiomyocytes, detyrosinated microtubules are required to resist to contractile compression during contraction: detyrosination promotes association with desmin (DES) at force-generating sarcomeres, leading to buckled microtubules and mechanical resistance to contraction.

The protein localises to the cytoplasm. Its subcellular location is the cytoskeleton. The catalysed reaction is GTP + H2O = GDP + phosphate + H(+). Its function is as follows. Tubulin is the major constituent of microtubules, protein filaments consisting of alpha- and beta-tubulin heterodimers. Microtubules grow by the addition of GTP-tubulin dimers to the microtubule end, where a stabilizing cap forms. Below the cap, tubulin dimers are in GDP-bound state, owing to GTPase activity of alpha-tubulin. This is Tubulin alpha-1B chain (TUBA1B) from Homo sapiens (Human).